We begin with the raw amino-acid sequence, 495 residues long: Aspartyl/glutamyl-tRNA(Asn/Gln) amidotransferase subunit B (495 aa).

It belongs to the GatB/GatE family. GatB subfamily. Heterotrimer of A, B and C subunits.

It catalyses the reaction L-glutamyl-tRNA(Gln) + L-glutamine + ATP + H2O = L-glutaminyl-tRNA(Gln) + L-glutamate + ADP + phosphate + H(+). It carries out the reaction L-aspartyl-tRNA(Asn) + L-glutamine + ATP + H2O = L-asparaginyl-tRNA(Asn) + L-glutamate + ADP + phosphate + 2 H(+). Its function is as follows. Allows the formation of correctly charged Asn-tRNA(Asn) or Gln-tRNA(Gln) through the transamidation of misacylated Asp-tRNA(Asn) or Glu-tRNA(Gln) in organisms which lack either or both of asparaginyl-tRNA or glutaminyl-tRNA synthetases. The reaction takes place in the presence of glutamine and ATP through an activated phospho-Asp-tRNA(Asn) or phospho-Glu-tRNA(Gln). In Acinetobacter baylyi (strain ATCC 33305 / BD413 / ADP1), this protein is Aspartyl/glutamyl-tRNA(Asn/Gln) amidotransferase subunit B.